The sequence spans 117 residues: Large ribosomal subunit protein bL20 (117 aa).

The protein belongs to the bacterial ribosomal protein bL20 family.

Its function is as follows. Binds directly to 23S ribosomal RNA and is necessary for the in vitro assembly process of the 50S ribosomal subunit. It is not involved in the protein synthesizing functions of that subunit. This chain is Large ribosomal subunit protein bL20, found in Thermomicrobium roseum (strain ATCC 27502 / DSM 5159 / P-2).